A 283-amino-acid polypeptide reads, in one-letter code: MDAIKKKMQAMKLEKDNALDRALLCEQQARDANLRAEKAEEEARALQKKIQTIENDLDQTQESLGQVMAKLEEKEKALQNAESEVAALNRRIQLLEEDLERSEERLATATAKLAEASQAADESERARKILENRSLADEERMDALENQLKEARFLAEEADKKYDEVARKLAMVEADLERAEERAEAGESKIVELEEELRVVGNNLKSLEVSEEKANQREEEISNRLRTLTTRLKEAEARAEFAERSVQKLQKEVDRLEDELVIEKEKYKIIGDDLDSAFVELIL.

A coiled-coil region spans residues 1-283; the sequence is MDAIKKKMQA…LDSAFVELIL (283 aa).

Belongs to the tropomyosin family. Homodimer.

Functionally, tropomyosin, in association with the troponin complex, plays a central role in the calcium dependent regulation of muscle contraction. In Locusta migratoria (Migratory locust), this protein is Tropomyosin.